A 415-amino-acid chain; its full sequence is Histidine--tRNA ligase (415 aa).

It belongs to the class-II aminoacyl-tRNA synthetase family. As to quaternary structure, homodimer.

The protein localises to the cytoplasm. It carries out the reaction tRNA(His) + L-histidine + ATP = L-histidyl-tRNA(His) + AMP + diphosphate + H(+). The chain is Histidine--tRNA ligase from Clostridium botulinum (strain Okra / Type B1).